Consider the following 698-residue polypeptide: D-(-)-3-hydroxybutyrate oligomer hydrolase (698 aa).

A signal peptide spans 1 to 32 (MTTIRGGSRRASLPALALLGVLLGACHSDDNA). The active-site Charge relay system is the Ser310.

The protein belongs to the D-(-)-3-hydroxybutyrate oligomer hydrolase family.

The protein resides in the secreted. The catalysed reaction is (3R)-hydroxybutanoate dimer + H2O = 2 (R)-3-hydroxybutanoate + H(+). Its pathway is lipid metabolism; butanoate metabolism. Its function is as follows. Participates in the degradation of poly-3-hydroxybutyrate (PHB). It works downstream of poly(3-hydroxybutyrate) depolymerase, hydrolyzing D(-)-3-hydroxybutyrate oligomers of various length (3HB-oligomers) into 3HB-monomers. This chain is D-(-)-3-hydroxybutyrate oligomer hydrolase, found in Burkholderia thailandensis (strain ATCC 700388 / DSM 13276 / CCUG 48851 / CIP 106301 / E264).